The sequence spans 305 residues: Ribosomal RNA small subunit methyltransferase H (305 aa).

S-adenosyl-L-methionine contacts are provided by residues 46 to 48 (GGH), D65, F92, D108, and H115.

The protein belongs to the methyltransferase superfamily. RsmH family.

The protein localises to the cytoplasm. It catalyses the reaction cytidine(1402) in 16S rRNA + S-adenosyl-L-methionine = N(4)-methylcytidine(1402) in 16S rRNA + S-adenosyl-L-homocysteine + H(+). In terms of biological role, specifically methylates the N4 position of cytidine in position 1402 (C1402) of 16S rRNA. The chain is Ribosomal RNA small subunit methyltransferase H from Trichormus variabilis (strain ATCC 29413 / PCC 7937) (Anabaena variabilis).